The chain runs to 150 residues: D-aminoacyl-tRNA deacylase (150 aa).

The short motif at 137–138 is the Gly-cisPro motif, important for rejection of L-amino acids element; sequence GP.

It belongs to the DTD family. In terms of assembly, homodimer.

The protein localises to the cytoplasm. It catalyses the reaction glycyl-tRNA(Ala) + H2O = tRNA(Ala) + glycine + H(+). The catalysed reaction is a D-aminoacyl-tRNA + H2O = a tRNA + a D-alpha-amino acid + H(+). In terms of biological role, an aminoacyl-tRNA editing enzyme that deacylates mischarged D-aminoacyl-tRNAs. Also deacylates mischarged glycyl-tRNA(Ala), protecting cells against glycine mischarging by AlaRS. Acts via tRNA-based rather than protein-based catalysis; rejects L-amino acids rather than detecting D-amino acids in the active site. By recycling D-aminoacyl-tRNA to D-amino acids and free tRNA molecules, this enzyme counteracts the toxicity associated with the formation of D-aminoacyl-tRNA entities in vivo and helps enforce protein L-homochirality. The polypeptide is D-aminoacyl-tRNA deacylase (Geotalea daltonii (strain DSM 22248 / JCM 15807 / FRC-32) (Geobacter daltonii)).